The sequence spans 534 residues: CD276 antigen (534 aa).

An N-terminal signal peptide occupies residues 1–28 (MLRRRGSPGMGVHVGAALGALWFCLTGA). In terms of domain architecture, Ig-like V-type 1 spans 29 to 139 (LEVQVPEDPV…GSAAVSLQVA (111 aa)). Topologically, residues 29-466 (LEVQVPEDPV…GQPMTFPPEA (438 aa)) are extracellular. 4 disulfides stabilise this stretch: Cys50-Cys122, Cys165-Cys220, Cys268-Cys340, and Cys383-Cys438. Residues Asn104, Asn189, Asn215, Asn322, Asn407, and Asn433 are each glycosylated (N-linked (GlcNAc...) asparagine). The 94-residue stretch at 145-238 (PSMTLEPNKD…QDAHSSVTIT (94 aa)) folds into the Ig-like C2-type 1 domain. Positions 243–357 (PTGAVEVQVP…GSAAVSLQVA (115 aa)) constitute an Ig-like V-type 2 domain. One can recognise an Ig-like C2-type 2 domain in the interval 363–456 (PSMTLEPNKD…QDAHGSVTIT (94 aa)). A helical membrane pass occupies residues 467-487 (LWVTVGLSVCLIALLVALAFV). Residues 488–534 (CWRKIKQSCEEENAGAEDQDGEGEGSKTALQPLKHSDSKEDDGQEIA) are Cytoplasmic-facing. Acidic residues predominate over residues 498 to 510 (EENAGAEDQDGEG). Residues 498–534 (EENAGAEDQDGEGEGSKTALQPLKHSDSKEDDGQEIA) form a disordered region. Position 525 is a phosphoserine (Ser525).

This sequence belongs to the immunoglobulin superfamily. BTN/MOG family. In terms of assembly, interacts with TREML2 and this interaction enhances T-cell activation. As to expression, ubiquitous but not detectable in peripheral blood lymphocytes or granulocytes. Weakly expressed in resting monocytes. Expressed in dendritic cells derived from monocytes. Expressed in epithelial cells of sinonasal tissue. Expressed in extravillous trophoblast cells and Hofbauer cells of the first trimester placenta and term placenta.

The protein resides in the membrane. Its function is as follows. May participate in the regulation of T-cell-mediated immune response. May play a protective role in tumor cells by inhibiting natural-killer mediated cell lysis as well as a role of marker for detection of neuroblastoma cells. May be involved in the development of acute and chronic transplant rejection and in the regulation of lymphocytic activity at mucosal surfaces. Could also play a key role in providing the placenta and fetus with a suitable immunological environment throughout pregnancy. Both isoform 1 and isoform 2 appear to be redundant in their ability to modulate CD4 T-cell responses. Isoform 2 is shown to enhance the induction of cytotoxic T-cells and selectively stimulates interferon gamma production in the presence of T-cell receptor signaling. This Homo sapiens (Human) protein is CD276 antigen (CD276).